The following is a 432-amino-acid chain: Gamma-glutamyl phosphate reductase (432 aa).

This sequence belongs to the gamma-glutamyl phosphate reductase family.

It localises to the cytoplasm. It carries out the reaction L-glutamate 5-semialdehyde + phosphate + NADP(+) = L-glutamyl 5-phosphate + NADPH + H(+). Its pathway is amino-acid biosynthesis; L-proline biosynthesis; L-glutamate 5-semialdehyde from L-glutamate: step 2/2. Catalyzes the NADPH-dependent reduction of L-glutamate 5-phosphate into L-glutamate 5-semialdehyde and phosphate. The product spontaneously undergoes cyclization to form 1-pyrroline-5-carboxylate. The sequence is that of Gamma-glutamyl phosphate reductase from Methylorubrum extorquens (strain CM4 / NCIMB 13688) (Methylobacterium extorquens).